We begin with the raw amino-acid sequence, 302 residues long: uncharacterized protein (302 aa).

Helical transmembrane passes span 3-23 (ILGV…SDWF), 39-59 (FVIG…LTSA), 77-97 (SCIC…PIIV), 106-126 (LVYL…FSWI), 128-148 (GVVL…NGSA), 163-183 (FSLV…ELFV), 199-219 (VIGF…VSLA), 227-247 (GMVL…ALAV), and 254-274 (LPAE…LYLF).

The protein belongs to the Ca(2+):cation antiporter (CaCA) (TC 2.A.19) family.

It is found in the cell membrane. This is an uncharacterized protein from Methanocaldococcus jannaschii (strain ATCC 43067 / DSM 2661 / JAL-1 / JCM 10045 / NBRC 100440) (Methanococcus jannaschii).